The following is a 347-amino-acid chain: Ferrochelatase (347 aa).

The Fe cation site is built by H193 and E273.

This sequence belongs to the ferrochelatase family.

It is found in the cytoplasm. It catalyses the reaction heme b + 2 H(+) = protoporphyrin IX + Fe(2+). The protein operates within porphyrin-containing compound metabolism; protoheme biosynthesis; protoheme from protoporphyrin-IX: step 1/1. Its function is as follows. Catalyzes the ferrous insertion into protoporphyrin IX. The polypeptide is Ferrochelatase (Rickettsia canadensis (strain McKiel)).